Here is a 186-residue protein sequence, read N- to C-terminus: Intraflagellar transport protein 27 homolog (186 aa).

Residues 12-19, 64-68, and 123-126 contribute to the GTP site; these read GDPTVGKT, DSAGK, and NKTD.

The protein belongs to the small GTPase superfamily. Rab family. Component of the IFT complex B, at least composed of IFT20, IFT22, IFT25, IFT27, IFT46, IFT52, TRAF3IP1/IFT54, IFT57, IFT74, IFT80, IFT81, and IFT88. Interacts with IFT25. Interacts with IFT70B. Interacts with RABL2/RABL2A; binding is equal in the presence of GTP or GDP. Interacts with IFT88. Interacts with ARL6; recognizes and binds with the GTP-free form of ARL6.

It localises to the cell projection. The protein resides in the cilium. The protein localises to the cytoplasm. It is found in the flagellum. Small GTPase-like component of the intraflagellar transport (IFT) complex B that promotes the exit of the BBSome complex from cilia via its interaction with ARL6. Not involved in entry of the BBSome complex into cilium. Prevents aggregation of GTP-free ARL6. Required for hedgehog signaling. Forms a subcomplex within the IFT complex B with IFT25. Its role in intraflagellar transport is mainly seen in tissues rich in ciliated cells such as kidney and testis. Essential for male fertility, spermiogenesis and sperm flagella formation. Plays a role in the early development of the kidney. May be involved in the regulation of ureteric bud initiation. The polypeptide is Intraflagellar transport protein 27 homolog (IFT27) (Bos taurus (Bovine)).